Consider the following 215-residue polypeptide: Chaperone protein TorD (215 aa).

It belongs to the TorD/DmsD family. TorD subfamily.

It localises to the cytoplasm. Involved in the biogenesis of TorA. Acts on TorA before the insertion of the molybdenum cofactor and, as a result, probably favors a conformation of the apoenzyme that is competent for acquiring the cofactor. This Vibrio vulnificus (strain YJ016) protein is Chaperone protein TorD.